The chain runs to 164 residues: Protein DOWNSTREAM OF FLC (164 aa).

The first 23 residues, 1–23, serve as a signal peptide directing secretion; the sequence is MAKSFVPLIAVLCVLVLPLAAMA. 3 cysteine pairs are disulfide-bonded: C36/C107, C39/C148, and C60/C95.

It belongs to the Ole e I family.

The protein resides in the secreted. In terms of biological role, part of a three-gene cluster containing FLC, UFC and DFC, which is coordinately regulated in response to vernalization. Not regulated by FLX. This chain is Protein DOWNSTREAM OF FLC (DFC), found in Arabidopsis thaliana (Mouse-ear cress).